The chain runs to 209 residues: ATP-dependent Clp protease proteolytic subunit (209 aa).

The active-site Nucleophile is serine 106. Histidine 131 is a catalytic residue.

Belongs to the peptidase S14 family. As to quaternary structure, fourteen ClpP subunits assemble into 2 heptameric rings which stack back to back to give a disk-like structure with a central cavity, resembling the structure of eukaryotic proteasomes.

Its subcellular location is the cytoplasm. It catalyses the reaction Hydrolysis of proteins to small peptides in the presence of ATP and magnesium. alpha-casein is the usual test substrate. In the absence of ATP, only oligopeptides shorter than five residues are hydrolyzed (such as succinyl-Leu-Tyr-|-NHMec, and Leu-Tyr-Leu-|-Tyr-Trp, in which cleavage of the -Tyr-|-Leu- and -Tyr-|-Trp bonds also occurs).. Functionally, cleaves peptides in various proteins in a process that requires ATP hydrolysis. Has a chymotrypsin-like activity. Plays a major role in the degradation of misfolded proteins. In Brucella melitensis biotype 2 (strain ATCC 23457), this protein is ATP-dependent Clp protease proteolytic subunit.